The primary structure comprises 771 residues: Phosphoglycerate kinase (771 aa).

Residues 1–406 (MKKLITDLNL…PGIDAIQNYE (406 aa)) are phosphoglycerate kinase. Residues 20 to 22 (DLN), R35, 58 to 61 (HLGR), R118, and R155 each bind substrate. Residues K206, G295, E334, and 361-364 (GGDS) contribute to the ATP site. Positions 407–771 (QTYEQYDSQV…KRFWFFGRKR (365 aa)) are unknown.

In the N-terminal section; belongs to the phosphoglycerate kinase family. As to quaternary structure, monomer.

It localises to the cytoplasm. The catalysed reaction is (2R)-3-phosphoglycerate + ATP = (2R)-3-phospho-glyceroyl phosphate + ADP. Its pathway is carbohydrate degradation; glycolysis; pyruvate from D-glyceraldehyde 3-phosphate: step 2/5. This Mycoplasmopsis pulmonis (strain UAB CTIP) (Mycoplasma pulmonis) protein is Phosphoglycerate kinase (pgk).